A 660-amino-acid chain; its full sequence is Macrolide export ATP-binding/permease protein MacB (660 aa).

One can recognise an ABC transporter domain in the interval 10–248; it reads LVLENIVRKF…AKGQALQGKQ (239 aa). An ATP-binding site is contributed by 46-53; that stretch reads GASGSGKS. Helical transmembrane passes span 285-305, 532-552, 593-613, and 625-645; these read FLTMLGVIIGIAAIIAMVALG, ILTLLVSSIAAISLIVGGIGV, IIGGGVGILFGLSIGGLFVLF, and SIIISLTFSTLIGICFGFSPA.

This sequence belongs to the ABC transporter superfamily. Macrolide exporter (TC 3.A.1.122) family. In terms of assembly, homodimer.

The protein localises to the cell inner membrane. Non-canonical ABC transporter that contains transmembrane domains (TMD), which form a pore in the inner membrane, and an ATP-binding domain (NBD), which is responsible for energy generation. Confers resistance against macrolides. This is Macrolide export ATP-binding/permease protein MacB from Bartonella quintana (strain Toulouse) (Rochalimaea quintana).